The chain runs to 216 residues: MGQKINPLGFRLGTTQSHDSIWFAQPTKYSENIQEDKKIRDWIKNYIQKNIRISSGVEGIGEIKIQKRIDLIQVIIYMGFPKLLIEGKPHKIEEFQTNMHKKLNCVNKKLNIAIVKITNAYKHPNILAEFIAGQLKNRVSFRKAMKKAIELTEQAGTKGVQVQIAGRIDGKEIARVEWIREGRVPLQTIRAKIEYCCYTVRTIYGILGIKVWIFSK.

The KH type-2 domain maps to 43–118 (IKNYIQKNIR…KLNIAIVKIT (76 aa)).

The protein belongs to the universal ribosomal protein uS3 family. As to quaternary structure, part of the 30S ribosomal subunit.

It localises to the plastid. Its subcellular location is the chloroplast. The protein is Small ribosomal subunit protein uS3c (rps3) of Phaseolus vulgaris (Kidney bean).